Here is a 382-residue protein sequence, read N- to C-terminus: GDP-mannose-dependent alpha-(1-6)-phosphatidylinositol monomannoside mannosyltransferase (382 aa).

The GDP-alpha-D-mannose site is built by arginine 200, lysine 205, isoleucine 257, and glutamate 294.

Belongs to the glycosyltransferase group 1 family. Glycosyltransferase 4 subfamily.

The enzyme catalyses a 1,2-diacyl-sn-glycero-3-phospho-[alpha-D-mannopyranosyl-(1&lt;-&gt;6)-D-myo-inositol] + GDP-alpha-D-mannose = a 2,6-O-bis(alpha-D-mannopyranosyl)-1-phosphatidyl-1D-myo-inositol + GDP + H(+). The catalysed reaction is a 1,2-diacyl-sn-glycero-3-phospho-[alpha-D-6-acyl-mannopyranosyl-(1&lt;-&gt;6)-D-myo-inositol] + GDP-alpha-D-mannose = a 2-O-(alpha-D-mannosyl)-6-O-(6-O-acyl-alpha-D-mannosyl)-1-phosphatidyl-1D-myo-inositol + GDP + H(+). Its pathway is phospholipid metabolism; phosphatidylinositol metabolism. Its function is as follows. Involved in the biosynthesis of phosphatidyl-myo-inositol mannosides (PIM) which are early precursors in the biosynthesis of lipomannans (LM) and lipoarabinomannans (LAM). Catalyzes the addition of a mannosyl residue from GDP-D-mannose (GDP-Man) to the position 6 of a phosphatidyl-myo-inositol bearing an alpha-1,2-linked mannose residue (PIM1) to generate phosphatidyl-myo-inositol bearing alpha-1,2- and alpha-1,6-linked mannose residues (Ac1PIM2). PimB also catalyzes the addition of a mannosyl residue from GDP-Man to the position 6 of phosphatidyl-myo-inositol bearing an acylated alpha-1,2-linked mannose residue (Ac1PIM1) to generate monoacylated phosphatidyl-myo-inositol bearing alpha-1,2- and alpha-1,6-linked mannose residues (Ac1PIM2). The addition of the second mannosyl residue by PimB preferentially occurs before the acylation of the mannosyl residue transferred by PimA. Also able to transfer a mannosyl residue from GDP-Man to the position 6 of a phosphatidyl-myo-inositol (PI), but this reaction is very slow. The sequence is that of GDP-mannose-dependent alpha-(1-6)-phosphatidylinositol monomannoside mannosyltransferase from Mycolicibacterium smegmatis (strain ATCC 700084 / mc(2)155) (Mycobacterium smegmatis).